The following is a 179-amino-acid chain: Protein AC4 (179 aa).

Belongs to the geminiviridae protein AC4/C4 family.

Pathogenicity determinant. May act as a suppressor of RNA-mediated gene silencing, also known as post-transcriptional gene silencing (PTGS), a mechanism of plant viral defense that limits the accumulation of viral RNAs. The sequence is that of Protein AC4 from African cassava mosaic virus (isolate Nigerian) (ACMV).